Consider the following 194-residue polypeptide: Small ribosomal subunit protein eS7 (194 aa).

The protein belongs to the eukaryotic ribosomal protein eS7 family.

In Drosophila melanogaster (Fruit fly), this protein is Small ribosomal subunit protein eS7 (RpS7).